Consider the following 401-residue polypeptide: Restriction of telomere capping protein 4 (401 aa).

The residue at position 23 (Ser-23) is a Phosphoserine. Basic and acidic residues predominate over residues 35 to 48 (KHDIHDRESDDLSG). A disordered region spans residues 35–59 (KHDIHDRESDDLSGHDAFSPSKKRG).

This sequence belongs to the RTC4 family.

The protein resides in the cytoplasm. It is found in the nucleus. May be involved in a process influencing telomere capping. This chain is Restriction of telomere capping protein 4 (RTC4), found in Saccharomyces cerevisiae (strain ATCC 204508 / S288c) (Baker's yeast).